We begin with the raw amino-acid sequence, 292 residues long: Ribosomal protein L11 methyltransferase (292 aa).

S-adenosyl-L-methionine is bound by residues Thr-145, Gly-166, Asp-188, and Asn-229.

Belongs to the methyltransferase superfamily. PrmA family.

It localises to the cytoplasm. The catalysed reaction is L-lysyl-[protein] + 3 S-adenosyl-L-methionine = N(6),N(6),N(6)-trimethyl-L-lysyl-[protein] + 3 S-adenosyl-L-homocysteine + 3 H(+). Methylates ribosomal protein L11. The protein is Ribosomal protein L11 methyltransferase of Pseudoalteromonas atlantica (strain T6c / ATCC BAA-1087).